A 157-amino-acid polypeptide reads, in one-letter code: Protein E6 (157 aa).

Zinc fingers lie at residues 43-80 (CRFC…CSGC) and 117-153 (CQYC…CRHC).

This sequence belongs to the papillomaviridae E6 protein family. In terms of assembly, forms homodimers. Interacts with ubiquitin-protein ligase UBE3A/E6-AP; this interaction stimulates UBE3A ubiquitin activity. Interacts with host BAK1.

The protein resides in the host cytoplasm. It localises to the host nucleus. Plays a major role in the induction and maintenance of cellular transformation. E6 associates with host UBE3A/E6-AP ubiquitin-protein ligase and modulates its activity. Protects host keratinocytes from apoptosis by mediating the degradation of host BAK1. May also inhibit host immune response. The polypeptide is Protein E6 (Human papillomavirus 23).